Here is a 71-residue protein sequence, read N- to C-terminus: Non-disulfide-bridged peptide 5.5 (71 aa).

Positions Met1–Ala23 are cleaved as a signal peptide. Leu36 is modified (leucine amide). The propeptide occupies Asp40–Arg71.

It belongs to the non-disulfide-bridged peptide (NDBP) superfamily. Short antimicrobial peptide (group 4) family. In terms of tissue distribution, expressed by the venom gland.

It localises to the secreted. The protein localises to the target cell membrane. Antimicrobial peptide. Is active on Mycobacterium abscessus subsp. massiliense (MBC=200 uM), a rapidly growing and emerging pathogen associated with healthcare infections. Also shows antifungal activities. Has a weak hemolytic activity on human erythrocytes (10% at 610 uM), indicating a low toxicity (therapeutic index (TI)=3.05). In addition, treatment of infected macrophages reduces the bacterial load. In vivo, treatment of M.abscessus-infected mice causes a decrease in the bacterial load in the lungs and liver. In Hoffmannihadrurus gertschi (Scorpion), this protein is Non-disulfide-bridged peptide 5.5.